Reading from the N-terminus, the 201-residue chain is Recombination protein RecR (201 aa).

The segment at 60-75 (CSCCGNVDTSDPCTIC) adopts a C4-type zinc-finger fold. The 96-residue stretch at 83–178 (TTLIVVEDVS…RVTRLAHGVP (96 aa)) folds into the Toprim domain.

It belongs to the RecR family.

In terms of biological role, may play a role in DNA repair. It seems to be involved in an RecBC-independent recombinational process of DNA repair. It may act with RecF and RecO. In Brucella anthropi (strain ATCC 49188 / DSM 6882 / CCUG 24695 / JCM 21032 / LMG 3331 / NBRC 15819 / NCTC 12168 / Alc 37) (Ochrobactrum anthropi), this protein is Recombination protein RecR.